A 511-amino-acid chain; its full sequence is Maturase K (511 aa).

Belongs to the intron maturase 2 family. MatK subfamily.

It localises to the plastid. The protein localises to the chloroplast. In terms of biological role, usually encoded in the trnK tRNA gene intron. Probably assists in splicing its own and other chloroplast group II introns. This chain is Maturase K, found in Bromus inermis (Smooth brome grass).